Consider the following 144-residue polypeptide: uncharacterized protein (144 aa).

Transmembrane regions (helical) follow at residues 10–30 (ILTR…GLGP) and 60–80 (YVFL…AIAV).

It is found in the membrane. This is an uncharacterized protein from Saccharomyces cerevisiae (strain ATCC 204508 / S288c) (Baker's yeast).